A 396-amino-acid polypeptide reads, in one-letter code: F-box protein At2g21930 (396 aa).

Residues 19 to 65 (SGNSVQIPFDLIPEILKRLPVKTLARFLSVSKEYTSIIRNRDFMKSY) enclose the F-box domain.

This Arabidopsis thaliana (Mouse-ear cress) protein is F-box protein At2g21930.